Consider the following 143-residue polypeptide: Antiholin-like protein LrgA (143 aa).

4 consecutive transmembrane segments (helical) span residues 6–26 (VYSF…SNII), 30–50 (LPIP…LLCL), 61–81 (LGTA…ISVI), and 97–117 (VIVV…QFIL).

The protein belongs to the CidA/LrgA family. LrgA subfamily.

The protein localises to the cell membrane. In terms of biological role, inhibits the expression or activity of extracellular murein hydrolases by interacting, possibly with LrgB, with the holin-like protein CidA. The LrgAB and CidA proteins may affect the proton motive force of the membrane. May be involved in programmed cell death (PCD), possibly triggering PCD in response to antibiotics and environmental stresses. This is Antiholin-like protein LrgA from Bacillus anthracis (strain A0248).